Reading from the N-terminus, the 352-residue chain is N-acetyl-gamma-glutamyl-phosphate reductase (352 aa).

C151 is an active-site residue.

The protein belongs to the NAGSA dehydrogenase family. Type 1 subfamily.

Its subcellular location is the cytoplasm. It catalyses the reaction N-acetyl-L-glutamate 5-semialdehyde + phosphate + NADP(+) = N-acetyl-L-glutamyl 5-phosphate + NADPH + H(+). It functions in the pathway amino-acid biosynthesis; L-arginine biosynthesis; N(2)-acetyl-L-ornithine from L-glutamate: step 3/4. Functionally, catalyzes the NADPH-dependent reduction of N-acetyl-5-glutamyl phosphate to yield N-acetyl-L-glutamate 5-semialdehyde. This is N-acetyl-gamma-glutamyl-phosphate reductase from Renibacterium salmoninarum (strain ATCC 33209 / DSM 20767 / JCM 11484 / NBRC 15589 / NCIMB 2235).